The sequence spans 141 residues: Succinate dehydrogenase [ubiquinone] cytochrome b small subunit 2 (141 aa).

The transit peptide at 1 to 24 (MSLIRCTTSKALKFRQLLKMAART) directs the protein to the mitochondrion. Topologically, residues 25 to 44 (SVTTPVSREPFSIEDHSLHF) are mitochondrial matrix. Residues 45–63 (KIERYWAAGMIPLIPTAYF) form a helical membrane-spanning segment. The Mitochondrial intermembrane segment spans residues 64-68 (IHTPA). The chain crosses the membrane as a helical span at residues 69–89 (MDAVLTVAIVLHVHWGIAGVV). Histidine 80 lines the heme b pocket. Residues 90–104 (SDYARPFVIGDTLAR) lie on the Mitochondrial matrix side of the membrane. Position 92 (tyrosine 92) interacts with a ubiquinone. A helical membrane pass occupies residues 105–126 (VARASVYIITVILLASLLHFNN). Residues 127–141 (SDVGLTKAFEMVWSL) are Mitochondrial intermembrane-facing.

It belongs to the CybS family. As to quaternary structure, component of the mitochondrial electron transport chain complex II composed of four subunits: a flavoprotein (Fp), an iron-sulfur protein (Ip), and a large cytochrome b (CybL) subunit and a small cytochrome b (CybS) subunit. There are 2 developmental stage-specific forms of complex II which have the Ip and CybL subunits in common. Complex II from the free-living larvae (aerobic environment) acts as a succinate dehydrogenase and is composed of the common subunit Ip and CybL and the stage specific subunits FpL and CybSL. Complex II from parasitic larvae and adults (anaerobic environment) acts as a fumarate reductase and is composed of the common subunit Ip and CybL and the stage specific subunits FpA and CybSA. Requires heme b as cofactor.

Its subcellular location is the mitochondrion inner membrane. Its pathway is carbohydrate metabolism; tricarboxylic acid cycle; fumarate from succinate (eukaryal route): step 1/1. Functionally, membrane-bound small subunit (CybS) of the mitochondrial electron transport chain complex II, which together with the membrane-bound large subunit (CybL), anchor the catalytic subunits to the inner mitochondria membrane. During the free-living egg-larvae stages, which occur in an aerobic environment, complex II acts as a succinate dehydrogenase by transferring electrons from succinate to ubiquinone. This chain is Succinate dehydrogenase [ubiquinone] cytochrome b small subunit 2, found in Ascaris suum (Pig roundworm).